The primary structure comprises 271 residues: Sulfur carrier protein adenylyltransferase (271 aa).

Residues arginine 13, glycine 40, glutamate 61, arginine 72, lysine 85, leucine 109, and 129 to 133 (DNFPT) each bind ATP. Positions 175 and 178 each coordinate Zn(2+). A Glycyl cysteine thioester (Cys-Gly) (interchain with G-Cter in TtuB) cross-link involves residue cysteine 192. Residues cysteine 249 and cysteine 252 each coordinate Zn(2+).

This sequence belongs to the HesA/MoeB/ThiF family. Zn(2+) serves as cofactor. In terms of processing, conjugated to TtuB via a covalent linkage that likely involves a lysine residue. Is able to form a covalent thioester adduct with TtuB via Cys-192 in vitro.

The enzyme catalyses [molybdopterin-synthase sulfur-carrier protein]-C-terminal Gly-Gly + ATP + H(+) = [molybdopterin-synthase sulfur-carrier protein]-C-terminal Gly-Gly-AMP + diphosphate. It catalyses the reaction [ThiS sulfur-carrier protein]-C-terminal Gly-Gly + ATP + H(+) = [ThiS sulfur-carrier protein]-C-terminal Gly-Gly-AMP + diphosphate. The catalysed reaction is [TtuB sulfur-carrier protein]-C-terminal Gly-Gly + ATP + H(+) = [TtuB sulfur-carrier protein]-C-terminal Gly-Gly-AMP + diphosphate. Its pathway is tRNA modification. It functions in the pathway cofactor biosynthesis; thiamine diphosphate biosynthesis. It participates in cofactor biosynthesis; molybdopterin biosynthesis. Its activity is regulated as follows. Enzymatic activity may be regulated by TtuB conjugation. Its function is as follows. Adenylyltransferase involved in the biosynthesis of several sulfur compounds. Is required for the 2-thiolation of 5-methyluridine residue at position 54 in the T loop of tRNAs, leading to 5-methyl-2-thiouridine (m(5)s(2)U or s(2)T). This modification allows thermal stabilization of tRNAs in thermophilic microorganisms, and is essential for cell growth at high temperatures. TtuC catalyzes the adenylation by ATP of the carboxyl group of the C-terminal glycine of sulfur carrier protein TtuB. Is also involved in the biosynthesis of thiamine, molybdenum cofactor (Moco) and probably tungsten cofactor (Wco), by adenylating the sulfur carriers ThiS and MoaD. Is required for the conjugation of TtuB to target proteins. The protein is Sulfur carrier protein adenylyltransferase of Thermus thermophilus (strain ATCC BAA-163 / DSM 7039 / HB27).